A 413-amino-acid chain; its full sequence is Tyrosine--tRNA ligase (413 aa).

Tyrosine 34 contacts L-tyrosine. The 'HIGH' region signature appears at 39–48 (PTSHSLTVGH). Residues tyrosine 164 and glutamine 168 each contribute to the L-tyrosine site. A 'KMSKS' region motif is present at residues 225–229 (KFGKS). Position 228 (lysine 228) interacts with ATP. The S4 RNA-binding domain maps to 347 to 413 (ILLVDALVQT…GKKNNALIVF (67 aa)).

It belongs to the class-I aminoacyl-tRNA synthetase family. TyrS type 1 subfamily. Homodimer.

Its subcellular location is the cytoplasm. It carries out the reaction tRNA(Tyr) + L-tyrosine + ATP = L-tyrosyl-tRNA(Tyr) + AMP + diphosphate + H(+). Catalyzes the attachment of tyrosine to tRNA(Tyr) in a two-step reaction: tyrosine is first activated by ATP to form Tyr-AMP and then transferred to the acceptor end of tRNA(Tyr). The protein is Tyrosine--tRNA ligase of Onion yellows phytoplasma (strain OY-M).